Consider the following 140-residue polypeptide: Sex-regulated protein janus-B (140 aa).

R42 provides a ligand contact to substrate. H69 (proton acceptor) is an active-site residue. 110–112 is a substrate binding site; it reads SRT.

Belongs to the janus family. In terms of tissue distribution, germline cells of adult males.

Functionally, janA and janB regulate somatic sex differentiation. The chain is Sex-regulated protein janus-B (janB) from Drosophila melanogaster (Fruit fly).